The following is an 880-amino-acid chain: Translation initiation factor IF-2 (880 aa).

3 disordered regions span residues 51 to 78, 93 to 116, and 142 to 293; these read KQHG…GSTG, YVKR…QAAN, and KEAD…FEKP. The span at 69–78 shows a compositional bias: polar residues; the sequence is STLNVKGSTG. A compositionally biased stretch (basic and acidic residues) spans 142–229; it reads KEADEKAKKA…ARKKAAEGGD (88 aa). Residues 269–279 are compositionally biased toward basic residues; it reads GRRTRRGKKQR. One can recognise a tr-type G domain in the interval 380–549; it reads SRAPVVTIMG…LLQAEMLDLS (170 aa). The tract at residues 389 to 396 is G1; the sequence is GHVDHGKT. 389 to 396 serves as a coordination point for GTP; that stretch reads GHVDHGKT. The tract at residues 414 to 418 is G2; that stretch reads GITQH. Residues 435-438 are G3; sequence DTPG. GTP is bound by residues 435-439 and 489-492; these read DTPGH and NKID. Positions 489–492 are G4; it reads NKID. Residues 525–527 are G5; sequence SAK.

This sequence belongs to the TRAFAC class translation factor GTPase superfamily. Classic translation factor GTPase family. IF-2 subfamily.

The protein resides in the cytoplasm. Functionally, one of the essential components for the initiation of protein synthesis. Protects formylmethionyl-tRNA from spontaneous hydrolysis and promotes its binding to the 30S ribosomal subunits. Also involved in the hydrolysis of GTP during the formation of the 70S ribosomal complex. In Psychromonas ingrahamii (strain DSM 17664 / CCUG 51855 / 37), this protein is Translation initiation factor IF-2.